A 630-amino-acid chain; its full sequence is Cyclin-T1-2 (630 aa).

A compositionally biased stretch (low complexity) spans 288 to 297 (QSSLSVSSSS). Disordered stretches follow at residues 288-313 (QSSLSVSSSSPEIGDPNDHLQVDSSQ) and 410-439 (RSGDKTKLCSEGGSSLTDVDSKSTQSVEPP). Over residues 421–439 (GGSSLTDVDSKSTQSVEPP) the composition is skewed to polar residues.

Belongs to the cyclin family. Cyclin T subfamily.

The sequence is that of Cyclin-T1-2 (CYCT1_2) from Oryza sativa subsp. japonica (Rice).